A 351-amino-acid polypeptide reads, in one-letter code: MSTVVRIPRSVSWKGDAIAVLNQTKLPHSTEYKTLTTIEEVWKSIVMLEVRGAPAIGIVAAFGLALASKKYTTLHIEEFQKKFNRDCNYLGTSRPTAVNLFWAIDRMRESIQEITTIKEAQKILEEEALRIQQEDEAVCRSIGEHALTCFKDGDNILTICNAGSIATARYGTALAPFYIGKEKGVRLHAYACETRPVLQGGRLTTWELKQAGIDVTLITDNTAAHAIQTKEISAIIVGADRIVANGDTANKIGTMNLAILAKYFDIPFYVAAPLSTFDITKQTGAEIVIEERDETEVTKIFGKQVAPVGTTVYNPAFDVTPNELITGIITEKGIIRGDYKREIASLFKKTS.

Substrate-binding positions include 51–53 (RGA), arginine 94, and glutamine 199. Aspartate 240 acts as the Proton donor in catalysis. 250–251 (NK) lines the substrate pocket.

The protein belongs to the EIF-2B alpha/beta/delta subunits family. MtnA subfamily. Homodimer.

It carries out the reaction 5-(methylsulfanyl)-alpha-D-ribose 1-phosphate = 5-(methylsulfanyl)-D-ribulose 1-phosphate. It participates in amino-acid biosynthesis; L-methionine biosynthesis via salvage pathway; L-methionine from S-methyl-5-thio-alpha-D-ribose 1-phosphate: step 1/6. Catalyzes the interconversion of methylthioribose-1-phosphate (MTR-1-P) into methylthioribulose-1-phosphate (MTRu-1-P). This is Methylthioribose-1-phosphate isomerase from Bacillus anthracis.